Consider the following 146-residue polypeptide: Large ribosomal subunit protein bL9 (146 aa).

It belongs to the bacterial ribosomal protein bL9 family. As to quaternary structure, part of the 50S ribosomal subunit. Contacts protein L31.

Binds to the 23S rRNA and protein L31. The protein is Large ribosomal subunit protein bL9 (rplI) of Deinococcus radiodurans (strain ATCC 13939 / DSM 20539 / JCM 16871 / CCUG 27074 / LMG 4051 / NBRC 15346 / NCIMB 9279 / VKM B-1422 / R1).